Consider the following 379-residue polypeptide: Queuine tRNA-ribosyltransferase (379 aa).

D94 functions as the Proton acceptor in the catalytic mechanism. Residues 94-98 (DSGGF), D148, Q191, and G218 each bind substrate. The interval 249-255 (GVGSPDA) is RNA binding. The Nucleophile role is filled by D268. The interval 273-277 (TRIAR) is RNA binding; important for wobble base 34 recognition. Residues C306, C308, C311, and H337 each coordinate Zn(2+).

This sequence belongs to the queuine tRNA-ribosyltransferase family. Homodimer. Within each dimer, one monomer is responsible for RNA recognition and catalysis, while the other monomer binds to the replacement base PreQ1. Requires Zn(2+) as cofactor.

It catalyses the reaction 7-aminomethyl-7-carbaguanine + guanosine(34) in tRNA = 7-aminomethyl-7-carbaguanosine(34) in tRNA + guanine. Its pathway is tRNA modification; tRNA-queuosine biosynthesis. Functionally, catalyzes the base-exchange of a guanine (G) residue with the queuine precursor 7-aminomethyl-7-deazaguanine (PreQ1) at position 34 (anticodon wobble position) in tRNAs with GU(N) anticodons (tRNA-Asp, -Asn, -His and -Tyr). Catalysis occurs through a double-displacement mechanism. The nucleophile active site attacks the C1' of nucleotide 34 to detach the guanine base from the RNA, forming a covalent enzyme-RNA intermediate. The proton acceptor active site deprotonates the incoming PreQ1, allowing a nucleophilic attack on the C1' of the ribose to form the product. After dissociation, two additional enzymatic reactions on the tRNA convert PreQ1 to queuine (Q), resulting in the hypermodified nucleoside queuosine (7-(((4,5-cis-dihydroxy-2-cyclopenten-1-yl)amino)methyl)-7-deazaguanosine). The polypeptide is Queuine tRNA-ribosyltransferase (Staphylococcus aureus (strain bovine RF122 / ET3-1)).